Consider the following 386-residue polypeptide: DNA-directed RNA polymerase subunit Rpo1C (386 aa).

Belongs to the RNA polymerase beta' chain family. In terms of assembly, part of the RNA polymerase complex.

The protein localises to the cytoplasm. It carries out the reaction RNA(n) + a ribonucleoside 5'-triphosphate = RNA(n+1) + diphosphate. Functionally, DNA-dependent RNA polymerase (RNAP) catalyzes the transcription of DNA into RNA using the four ribonucleoside triphosphates as substrates. Forms part of the jaw domain. This Methanococcus maripaludis (strain C6 / ATCC BAA-1332) protein is DNA-directed RNA polymerase subunit Rpo1C.